Consider the following 86-residue polypeptide: Triple QxxK/R motif-containing protein (86 aa).

A helical membrane pass occupies residues Val-51–Leu-71.

It belongs to the TRIQK family.

It localises to the endoplasmic reticulum membrane. Functionally, may play a role in cell growth and maintenance of cell morphology. The sequence is that of Triple QxxK/R motif-containing protein (TRIQK) from Homo sapiens (Human).